Here is a 498-residue protein sequence, read N- to C-terminus: ATP synthase subunit beta, chloroplastic (498 aa).

172-179 (GGAGVGKT) contacts ATP.

This sequence belongs to the ATPase alpha/beta chains family. F-type ATPases have 2 components, CF(1) - the catalytic core - and CF(0) - the membrane proton channel. CF(1) has five subunits: alpha(3), beta(3), gamma(1), delta(1), epsilon(1). CF(0) has four main subunits: a(1), b(1), b'(1) and c(9-12).

The protein resides in the plastid. Its subcellular location is the chloroplast thylakoid membrane. It catalyses the reaction ATP + H2O + 4 H(+)(in) = ADP + phosphate + 5 H(+)(out). Functionally, produces ATP from ADP in the presence of a proton gradient across the membrane. The catalytic sites are hosted primarily by the beta subunits. The polypeptide is ATP synthase subunit beta, chloroplastic (Asarum canadense (Wild ginger)).